We begin with the raw amino-acid sequence, 277 residues long: Sulfur carrier protein FdhD (277 aa).

Cys-121 functions as the Cysteine persulfide intermediate in the catalytic mechanism. 260 to 265 contributes to the Mo-bis(molybdopterin guanine dinucleotide) binding site; the sequence is FCKPGR.

It belongs to the FdhD family.

Its subcellular location is the cytoplasm. Its function is as follows. Required for formate dehydrogenase (FDH) activity. Acts as a sulfur carrier protein that transfers sulfur from IscS to the molybdenum cofactor prior to its insertion into FDH. This chain is Sulfur carrier protein FdhD, found in Escherichia coli O6:K15:H31 (strain 536 / UPEC).